The following is a 102-amino-acid chain: MAGQKIRIRLKSYDHEVIDQSAKKIVETVTNAGATVVGPVPLPTEKNVFCVIRSPHKYKDSREHFEMRTHKRLIDIVDPTPKAVDSLMHIDLPADVNIEIKL.

This sequence belongs to the universal ribosomal protein uS10 family. Part of the 30S ribosomal subunit.

Functionally, involved in the binding of tRNA to the ribosomes. This chain is Small ribosomal subunit protein uS10, found in Bifidobacterium longum (strain DJO10A).